The primary structure comprises 456 residues: CBL-interacting serine/threonine-protein kinase 2 (456 aa).

Residues 12 to 266 (YEVGRLLGQG…IAKIKESSWF (255 aa)) form the Protein kinase domain. Residues 18–26 (LGQGTFAKV) and Lys-41 each bind ATP. Asp-134 functions as the Proton acceptor in the catalytic mechanism. The tract at residues 152-181 (DFGLSALADCKRQDGLLHTTCGTPAYVAPE) is activation loop. Residue Ser-156 is modified to Phosphoserine. Phosphothreonine is present on Thr-170. The tract at residues 280-309 (MEKQQVREATNPMEAGGSGQNENGENHEPP) is disordered. The NAF domain maps to 309 to 333 (PRLATLNAFDIIALSTGFGLAGLFG). The PPI stretch occupies residues 338–367 (KRESRFASQKPASEIISKLVEVAKCLKLKI).

This sequence belongs to the protein kinase superfamily. CAMK Ser/Thr protein kinase family. SNF1 subfamily. As to quaternary structure, interacts with CBL2, CBL3 and CBL5. The cofactor is Mn(2+).

The catalysed reaction is L-seryl-[protein] + ATP = O-phospho-L-seryl-[protein] + ADP + H(+). It catalyses the reaction L-threonyl-[protein] + ATP = O-phospho-L-threonyl-[protein] + ADP + H(+). CIPK serine-threonine protein kinases interact with CBL proteins. Binding of a CBL protein to the regulatory NAF domain of CIPK protein lead to the activation of the kinase in a calcium-dependent manner. The chain is CBL-interacting serine/threonine-protein kinase 2 (CIPK2) from Arabidopsis thaliana (Mouse-ear cress).